The following is a 477-amino-acid chain: uncharacterized protein (477 aa).

Helical transmembrane passes span 31–51 (LLRL…LLGT), 60–80 (LGVP…VAPF), 103–123 (LWFG…SLIL), 130–150 (MGPA…AGVG), 177–197 (LLYV…GWLL), 205–225 (LIRV…IALW), 248–268 (AWGL…VMVG), 291–311 (VGQT…GFIW), 334–354 (IVAF…LFFA), 359–379 (IGLG…MVVV), 384–404 (GIAL…AVFI), and 433–453 (VVYV…GPLV).

This sequence belongs to the PucC family.

It is found in the cell membrane. This is an uncharacterized protein from Rhodobacter capsulatus (Rhodopseudomonas capsulata).